The chain runs to 614 residues: MSNLRKFKDEERESEYGRVYAVSGPVVTAEAMSGSAMYELVRVGYYELVGEIIRLEGDMATIQVYEETSGVTVGDPVLRTGKPLSVELGPGIMGSIFDGIQRPLRDIGVMTNSIYIPKGVNTTALSRSEMWEFNPLNVRVGSHITGGDLYGVVHENTLVKQRMIVAPRAKGTVRYIAPAGNYNLEDIVLETEFDGEITKHTMLQVWPVRQPRPVTEKLPANHPLFTGQRVLDSLFPCVQGGTTAIPGAFGCGKTVISQALSKYSNSDVIIYVGCGERGNEMSEVLRDFPELTCEIDGVTESIMKRTALVANTSNMPVAAREASIYTGITLSEYFRDMGYNVAMMADSTSRWAEALREISGRLAEMPADSGYPAYLGARLATFYERAGRVKCLGNPEREGSVSIVGAVSPPGGDFSDPVTSATLGIVQVFWGLDKKLAQRKHFPSINWLISYSKYMRALDEYYDKNYPEFVPLRTKVKEILQEEEDLSEIVQLVGKASLAETDKVTLEVAKLLKDDFLQQNSYSPYDRVCPFYKTVGMLRNIMAFYETARHAVESTAQSDNKITWNTIRESMGGIMYQLSSMKFKDPVKDGEQKIKADYDQLYEDLQQAFRNLED.

247-254 contacts ATP; it reads GAFGCGKT.

This sequence belongs to the ATPase alpha/beta chains family. As to quaternary structure, V-ATPase is a heteromultimeric enzyme made up of two complexes: the ATP-hydrolytic V1 complex and the proton translocation V0 complex. The V1 complex consists of three catalytic AB heterodimers that form a heterohexamer, three peripheral stalks each consisting of EG heterodimers, one central rotor including subunits D and F, and the regulatory subunits C and H. The proton translocation complex V0 consists of the proton transport subunit a, a ring of proteolipid subunits c9c'', rotary subunit d, subunits e and f, and the accessory subunits VhaAC45 and ATP6AP2.

It catalyses the reaction ATP + H2O + 4 H(+)(in) = ADP + phosphate + 5 H(+)(out). ATP hydrolysis occurs at the interface between the nucleotide-binding domains of subunits A and B. ATP hydrolysis triggers a conformational change in the subunits D and F, which induces a shift of subunit d. The c-ring is subsequently rotated and results in a continuous proton translocation across the membrane. In terms of biological role, catalytic subunit of the V1 complex of vacuolar(H+)-ATPase (V-ATPase), a multisubunit enzyme composed of a peripheral complex (V1) that hydrolyzes ATP and a membrane integral complex (V0) that translocates protons. V-ATPase is responsible for acidifying and maintaining the pH of intracellular compartments and in some cell types, is targeted to the plasma membrane, where it is responsible for acidifying the extracellular environment. The sequence is that of V-type proton ATPase catalytic subunit A isoform 1 (Vha68-1) from Drosophila melanogaster (Fruit fly).